Here is a 600-residue protein sequence, read N- to C-terminus: Proline--tRNA ligase (600 aa).

Belongs to the class-II aminoacyl-tRNA synthetase family. ProS type 1 subfamily. As to quaternary structure, homodimer.

It localises to the cytoplasm. It catalyses the reaction tRNA(Pro) + L-proline + ATP = L-prolyl-tRNA(Pro) + AMP + diphosphate. Its function is as follows. Catalyzes the attachment of proline to tRNA(Pro) in a two-step reaction: proline is first activated by ATP to form Pro-AMP and then transferred to the acceptor end of tRNA(Pro). As ProRS can inadvertently accommodate and process non-cognate amino acids such as alanine and cysteine, to avoid such errors it has two additional distinct editing activities against alanine. One activity is designated as 'pretransfer' editing and involves the tRNA(Pro)-independent hydrolysis of activated Ala-AMP. The other activity is designated 'posttransfer' editing and involves deacylation of mischarged Ala-tRNA(Pro). The misacylated Cys-tRNA(Pro) is not edited by ProRS. The sequence is that of Proline--tRNA ligase from Prochlorococcus marinus (strain MIT 9515).